The sequence spans 189 residues: Accessory gene regulator protein B (189 aa).

5 helical membrane-spanning segments follow: residues 50 to 70, 83 to 103, 105 to 125, 143 to 163, and 164 to 184; these read VSLL…FFFI, LLCY…VGYV, VSSL…SIYA, KIKA…LNEP, and YQQL…PIFF.

Belongs to the AgrB family.

It localises to the cell membrane. In terms of biological role, essential for the production of a quorum sensing system signal molecule, the autoinducing peptide (AIP). This quorum sensing system is responsible for the regulation of the expression of virulence factor genes. Involved in the proteolytic processing of AgrD, the precursor of AIP. This Staphylococcus saprophyticus subsp. saprophyticus (strain ATCC 15305 / DSM 20229 / NCIMB 8711 / NCTC 7292 / S-41) protein is Accessory gene regulator protein B.